A 647-amino-acid chain; its full sequence is Methyl-accepting chemotaxis protein McpK (647 aa).

Topologically, residues 1–16 are cytoplasmic; it reads MYDWWVLQLAKLSVSR. The helical transmembrane segment at 17–37 threads the bilayer; that stretch reads KLMVGFGVLLALLLLVVISSN. Topologically, residues 38–291 are periplasmic; that stretch reads RTLTHQTALS…LRESTASRDR (254 aa). Residues 45 to 287 form the HBM domain; sequence ALSEQLAEVA…AGRQLRESTA (243 aa). The chain crosses the membrane as a helical span at residues 292–312; it reads ASLWLIAALALAFGCVAGWAI. Residues 313–647 lie on the Cytoplasmic side of the membrane; it reads NRQIVRPLDE…LQAQVGRFRL (335 aa). The region spanning 314-370 is the HAMP domain; it reads RQIVRPLDEALAQAEAIAAGDLGKRPQNPLTLQRRDELGQLQRVMQRMGDSLRELVG. The region spanning 375 to 611 is the Methyl-accepting transducer domain; sequence GVSQLASSAE…EINRSVLSVR (237 aa).

Belongs to the methyl-accepting chemotaxis (MCP) protein family. As to quaternary structure, ligand free ligand-binding domain (LBD) is present in a monomer-dimer equilibrium. AlphaKG binding stabilizes the homodimer.

The protein resides in the cell inner membrane. In terms of biological role, chemotactic-signal transducers respond to changes in the concentration of attractants and repellents in the environment, transduce a signal from the outside to the inside of the cell, and facilitate sensory adaptation through the variation of the level of methylation. McpK is a chemoreceptor that specifically binds and mediates chemotaxis to alpha-ketoglutarate (alphaKG). The protein is Methyl-accepting chemotaxis protein McpK of Pseudomonas aeruginosa (strain ATCC 15692 / DSM 22644 / CIP 104116 / JCM 14847 / LMG 12228 / 1C / PRS 101 / PAO1).